Consider the following 547-residue polypeptide: Threonylcarbamoyladenosine tRNA methylthiotransferase (547 aa).

Residues 30–51 (ARKSVVPRARKHKQETGEQMQT) form a disordered region. Residues 59–167 (QKVWLKTWGC…VVEVVDEAIK (109 aa)) form the MTTase N-terminal domain. Positions 68, 104, 133, 209, 213, and 216 each coordinate [4Fe-4S] cluster. Positions 195–426 (RKNPLIEIIS…ALFHSYRPYD (232 aa)) constitute a Radical SAM core domain. The TRAM domain maps to 426–488 (DHKMGEQQQV…KHYMKGRPLE (63 aa)). Residues 527–547 (ILAVVLLLSAVLLALLMEKLL) form a helical membrane-spanning segment.

It belongs to the methylthiotransferase family. CDKAL1 subfamily. It depends on [4Fe-4S] cluster as a cofactor.

It is found in the endoplasmic reticulum membrane. It catalyses the reaction N(6)-L-threonylcarbamoyladenosine(37) in tRNA + (sulfur carrier)-SH + AH2 + 2 S-adenosyl-L-methionine = 2-methylsulfanyl-N(6)-L-threonylcarbamoyladenosine(37) in tRNA + (sulfur carrier)-H + 5'-deoxyadenosine + L-methionine + A + S-adenosyl-L-homocysteine + 2 H(+). Functionally, catalyzes the methylthiolation of N6-threonylcarbamoyladenosine (t(6)A), leading to the formation of 2-methylthio-N6-threonylcarbamoyladenosine (ms(2)t(6)A) at position 37 in tRNAs that read codons beginning with adenine. The chain is Threonylcarbamoyladenosine tRNA methylthiotransferase (cdkal1) from Danio rerio (Zebrafish).